We begin with the raw amino-acid sequence, 3411 residues long: MSGRKAQGKTLGVNMVRRGVRSLSNKIKQKTKQIGNRPGPSRGVQGFISFFSFNILTGKKITAHLKRLWKMLDPRQGLAVLRKVKRVVAGLMRGLSSRKRRSHDVLTVQFLILGMLLMAGGVTLVRKNRWLLLNVTSEDLGKTFSVGTGNCTTNILEAKYWCPDSMEYNCPNLSPREEPDDIDCWCYGVENVRVAYGKCDSAGRSRRSRRAIDLPTHENHGLKTRQEKWMTGRMGERQLQKIERWLVRNPFFAVTALAIAYLVGSNMTQRVVIALLVLAVGPAYSAHCIGITDRDFIEGVHGGTWVSATLEQDKCVTVMAPDKPSLDISLETVAIDGPAEARKVCYNAVLTHVKINDKCPSTGEAHLAEENEGDNACKRTYSDRGWGNGCGLFGKGSIVACAKFTCAKSMSLFEVDQTKIQYVIRAQLHVGAKQENWNTDIKTLKFDALSGSQEAEFTGYGKATLECRVQTAVDFGNSYIAEMEKESWIVDRQWAQDLTLPWQSGSGGVWREMHHLVEFEPPHAATIRVLALGNQEGSLKTALTGAMRVTKDTNDNNLYKLHGGHVSCRVKLSALTLKGTSYKMCTDKMSFVKNPTDTDHGTVVMQVKVPKGAPCKIPVIVADDLTAAINKGILVTVNPIASTNDDEVLIEVNPPFGDSYIIVGTGDSRLTYQWHKEGSSIGKLFTQTMKGAERLAVMGDAAWDFSSAGGLFTSIGKGSHTVFGSAFQGLFGGLSWITKVIMGAVLIWVGINTRNMTMSMSMILVGVIMMFLSLGVGADQGCAINFGKRELKCGDGIFIFRDSDDWLNKYSYYPEDPVKLASIVKASFEEGKCGLNSVDSLDHEMWRSRADEINAILEENEVDISVVVQDPKNVYQRGTHPFSRIRDGLQYGWKTWGKNLVFSPGRKNGSFIIDGKSRKECPFSNRVWNSFQIEEFGTGVFTTRVYMDAVFEYTIDCDGSILGAAVNGKKSAHGSPTFWMGSHEVNGTWMIHTLETLDYKECEWPLTHTIGTSVEESDMFMPRSIGGPVSSHNHIPGYKVQTNGPWMQVPLEVKREACPGTSVIIDGNCDGRGKSTRSTTDSGKIIPEWCCRSCTMPPVSFHGNDGCWYPMEIRPRKTHESHLVRSWVTAGEIHAVPFGLVSMMIAMEVVLRKRQGPKQMLVGGMVLLGAMLVGQVTLLDLLKLTMAVGLHFHEMNNGGDAMYMALIAAFSIRPGLLIGFGLRTLWSPRERLVLTLGAAMVEIALGGMMGGLWKYLNAVSLCILTINAVASRKASNTILPLMALLTPVTMAEVRLATMLLCAVVIIGVLHQNSKDTSMQKTIPLVALTLTSYLGLTQPFLGLCAFLATRIFGRRSIPVNEALAAAGLVGVLAGLAFQEMENFLGPIAVGGILMMLVSVAGRVDGLELKKLGEVSWEEEAEISGSSARYDVALSEQGEFKLLSEEKVPWDQVVMTSLALVGAAIHPSALLLVLAGWLFHVKGARRSGDVLWDIPTPKIIEECEHLEDGIYGIFQSTFLGASQRGVGVAQGGVFHTMWHVTRGAFLVRNGKKLIPSWASVKEDLVAYGGSWKLEGRWDGEEEVQLIAAVPGKNVVNVQTKPSLFKVRNGGEIGAVALDYPSGTSGSPIVNRNGEVIGLYGNGILVGDNSFVSAISQTEVKEEGKEELQEIPTMLKKGMTTILDYHPGAGKTRRFLPQILAECARRRLRTLVLAPTRVVLSEMKEAFHGLDVKFHTQAFSAHGSGREVIDAMCHATLTYRMLEPTRIVNWEVIIMDEAHFLDPASIAARGWAAHRARANESATILMTATPPGTSDEFPHSNGEIEDVQTDIPSEPWNTGHDWILADKRPTAWFLPSIRAANVMAASLRKAGKSVVVLNRKTFEKEYPTIKQKKPDFILATDIAEMGANLCVDRVLDCRTAFKPVLVDEGRKVAIKGPLRISASSAAQRRGRIGRNPNRDGDSYYYSEPTSEDNAHHVCWLEASMLLDNMEVRGGMVAPLYGIEGTKTPVSPGEMRLRDDQRRVSRELVRNCDLPVWLSWQVAKAGLKTNDRKWCFDGPKEHEILNDSGETVKCRAPGGAKRPLRPRWCDERVSSDQSALADFIKFAEGRRGAAEILVVLSELPDFLAKKGGEAMDTISVFLHSEEGSRAYRNALSMMPEAMTIVMLFILAGLLTSGMVIFFMSPKGISRMSMAMGTMAGCGYLMFLGGAKPTHISYIMLIFFVLMVVVIPEPGQQRSIQDNQVAYLIIGILTLVSVVAANELGMLERTKEDLFGKKNLIPSSASPWSWPDLDLKPGAAWTVYVGIVTILSPMLHHWIKVEYGNLSLSGIAQSASVLSFMDKGIPFMKMNISVIILLVSGWNSITVMPLLCGIGCAMLHWTLILPGIKAQQSKLPQRRVFHGVAKNPVVDGNPTVDIEEAPEMPALYEKKLALYLLLALSLASVAMCRTPFSLAEGIVLASAALGPLIEGNTSLLWNGPMAVSMTGVMRGNYYAFVGVMYNLWKMETGRRGRANGKTLGEVWKRELNLLDRQQFELYKRTDIVEVDRDTARRHLAEGKVDTGVAVSRGTAKLRWFHERGYVKLEGRVTDLGCGRGGWCYYAAAQKEVSGVKGFTLGREGHEKPMNVRSLGWNIITFKDKTDIHHLEPVKCDTLLCDIGESSSSSVTEGERTMRVLDTVEKWLACGVDNFCVKVLAPYMPDVLEKLELLQRRFGGTVIRNPLSRNSTHEMYYVSGARSNVTFTVNQTSRLLMRRMRRPTGKVTLEADVILPIGTRSVETDKGPLNREAIEERVERIKSEYMTTWFYDNDNPYRTWHYCGSYVTKTSGSAASMVNGVIKILTYPWDRIEEVTRMAMTDTTPFGQQRVFKEKVDTRAKDPPAGTRKIMKVVNRWLFRHLAREKNPRLCTKEEFIAKVRSHAAIGAYLEEQEQWKTANEAVQDPKFWELVDEERRLHQQGRCRTCVYNMMGKREKKLSEFGKAKGSRAIWYMWLGARYLEFEALGFLNEDHWASRENSGGGVEGIGLQYLGYVIRDLAAMDGGGFYADDTAGWDTRITEADLDDEQEILNYMSSHHKKLAQAVMEMTYKNKVVKVLRPTPGGKAYMDVISRRDQRGSGQVVTYALNTITNLKVQLIRMAEAEMVIHHHHVQDCDDSTLVRLEAWLIEHGCDRLNRMAVNGDDCVVRPIDDRFGMALSHLNAMSKVRKDISEWQPSKGWNDWENVPFCSHHFHELQLKDGRRIVVPCREQDELIGRGRVSPGNGWMIKETACLSKAYANMWSLMYFHKRDMRLLSLAVSSAVPTSWVPQGRTTWSIHGKGEWMTTEDMLEVWNRVWITNNPHMQDKTVVKEWRDVPYLTKRQDKLCGSLIGMTNRATWASHIHLVIHRIRTLIGQEKYTDYLTVMDRYSVDADLQPGELI.

Over 1-104 (MSGRKAQGKT…LSSRKRRSHD (104 aa)) the chain is Cytoplasmic. The hydrophobic; homodimerization of capsid protein C stretch occupies residues 38–72 (PGPSRGVQGFISFFSFNILTGKKITAHLKRLWKML). The propeptide at 102–121 (SHDVLTVQFLILGMLLMAGG) is ER anchor for the capsid protein C, removed in mature form by serine protease NS3. Residues 105-125 (VLTVQFLILGMLLMAGGVTLV) form a helical membrane-spanning segment. Over 126–244 (RKNRWLLLNV…GERQLQKIER (119 aa)) the chain is Extracellular. N-linked (GlcNAc...) asparagine; by host glycans are attached at residues Asn134 and Asn150. Residues 245–265 (WLVRNPFFAVTALAIAYLVGS) traverse the membrane as a helical segment. Residues 266–270 (NMTQR) lie on the Cytoplasmic side of the membrane. A helical transmembrane segment spans residues 271–285 (VVIALLVLAVGPAYS). At 286–730 (AHCIGITDRD…TVFGSAFQGL (445 aa)) the chain is on the extracellular side. Disulfide bonds link Cys288–Cys315, Cys345–Cys401, Cys345–Cys406, Cys359–Cys390, Cys377–Cys401, Cys377–Cys406, Cys467–Cys568, and Cys585–Cys615. The fusion peptide stretch occupies residues 383–396 (DRGWGNGCGLFGKG). A helical membrane pass occupies residues 731–751 (FGGLSWITKVIMGAVLIWVGI). Residues 752 to 757 (NTRNMT) lie on the Extracellular side of the membrane. Residues 758 to 778 (MSMSMILVGVIMMFLSLGVGA) form a helical membrane-spanning segment. Residues 779–1132 (DQGCAINFGK…LVRSWVTAGE (354 aa)) lie on the Extracellular side of the membrane. 6 cysteine pairs are disulfide-bonded: Cys782/Cys793, Cys833/Cys921, Cys957/Cys1002, Cys1058/Cys1107, Cys1069/Cys1091, and Cys1090/Cys1094. Residues Asn908 and Asn986 are each glycosylated (N-linked (GlcNAc...) asparagine; by host). The chain crosses the membrane as a helical span at residues 1133-1153 (IHAVPFGLVSMMIAMEVVLRK). At 1154–1201 (RQGPKQMLVGGMVLLGAMLVGQVTLLDLLKLTMAVGLHFHEMNNGGDA) the chain is on the cytoplasmic side. The helical transmembrane segment at 1202-1222 (MYMALIAAFSIRPGLLIGFGL) threads the bilayer. The Lumenal portion of the chain corresponds to 1223–1287 (RTLWSPRERL…ILPLMALLTP (65 aa)). The chain crosses the membrane as a helical span at residues 1288 to 1308 (VTMAEVRLATMLLCAVVIIGV). Residues 1309 to 1355 (LHQNSKDTSMQKTIPLVALTLTSYLGLTQPFLGLCAFLATRIFGRRS) lie on the Cytoplasmic side of the membrane. A helical membrane pass occupies residues 1356-1376 (IPVNEALAAAGLVGVLAGLAF). Topologically, residues 1377–1378 (QE) are lumenal. Residues 1379–1399 (MENFLGPIAVGGILMMLVSVA) form a helical membrane-spanning segment. At 1400-1456 (GRVDGLELKKLGEVSWEEEAEISGSSARYDVALSEQGEFKLLSEEKVPWDQVVMTSL) the chain is on the cytoplasmic side. Positions 1407–1446 (LKKLGEVSWEEEAEISGSSARYDVALSEQGEFKLLSEEKV) are interacts with and activates NS3 protease. The helical intramembrane region spans 1457 to 1477 (ALVGAAIHPSALLLVLAGWLF). The Cytoplasmic portion of the chain corresponds to 1478 to 2157 (HVKGARRSGD…RNALSMMPEA (680 aa)). The 181-residue stretch at 1485–1665 (SGDVLWDIPT…EVKEEGKEEL (181 aa)) folds into the Peptidase S7 domain. Catalysis depends on charge relay system; for serine protease NS3 activity residues His1537, Asp1561, and Ser1622. The region spanning 1669 to 1825 (PTMLKKGMTT…HSNGEIEDVQ (157 aa)) is the Helicase ATP-binding domain. Residues 1673 to 1676 (KKGM) are important for RNA-binding. Residue 1682-1689 (YHPGAGKT) participates in ATP binding. The DEAH box signature appears at 1773–1776 (DEAH). Residues 1820–1997 (EIEDVQTDIP…VRGGMVAPLY (178 aa)) form the Helicase C-terminal domain. Lys1877 is subject to N6-acetyllysine; by host. The helical transmembrane segment at 2158–2178 (MTIVMLFILAGLLTSGMVIFF) threads the bilayer. Residues 2179 to 2186 (MSPKGISR) are Lumenal-facing. Residues 2187–2207 (MSMAMGTMAGCGYLMFLGGAK) constitute an intramembrane region (helical). At 2208–2209 (PT) the chain is on the lumenal side. The helical transmembrane segment at 2210–2230 (HISYIMLIFFVLMVVVIPEPG) threads the bilayer. Residues 2231-2241 (QQRSIQDNQVA) are Cytoplasmic-facing. Residues 2242 to 2262 (YLIIGILTLVSVVAANELGML) form a helical membrane-spanning segment. Over 2263 to 2293 (ERTKEDLFGKKNLIPSSASPWSWPDLDLKPG) the chain is Lumenal. An intramembrane region (helical) is located at residues 2294-2314 (AAWTVYVGIVTILSPMLHHWI). The Lumenal portion of the chain corresponds to 2315–2360 (KVEYGNLSLSGIAQSASVLSFMDKGIPFMKMNISVIILLVSGWNSI). A helical membrane pass occupies residues 2361-2380 (TVMPLLCGIGCAMLHWTLIL). Over 2381–2421 (PGIKAQQSKLPQRRVFHGVAKNPVVDGNPTVDIEEAPEMPA) the chain is Cytoplasmic. The chain crosses the membrane as a helical span at residues 2422–2442 (LYEKKLALYLLLALSLASVAM). At 2443–2445 (CRT) the chain is on the lumenal side. A helical transmembrane segment spans residues 2446–2466 (PFSLAEGIVLASAALGPLIEG). The Cytoplasmic segment spans residues 2467-3411 (NTSLLWNGPM…DADLQPGELI (945 aa)). The mRNA cap 0-1 NS5-type MT domain maps to 2507–2771 (GRANGKTLGE…DVILPIGTRS (265 aa)). Ser2562 provides a ligand contact to S-adenosyl-L-methionine. Position 2562 is a phosphoserine (Ser2562). Lys2567 functions as the For 2'-O-MTase activity in the catalytic mechanism. Residues Gly2592, Trp2593, Thr2610, Leu2611, Asp2637, and Ile2638 each coordinate S-adenosyl-L-methionine. Asp2652 functions as the For 2'-O-MTase activity in the catalytic mechanism. Ile2653 is an S-adenosyl-L-methionine binding site. Residues Lys2688 and Glu2724 each act as for 2'-O-MTase activity in the active site. Tyr2726 provides a ligand contact to S-adenosyl-L-methionine. The Nuclear localization signal signature appears at 2878 to 2911 (RKIMKVVNRWLFRHLAREKNPRLCTKEEFIAKVR). Glu2945, His2949, Cys2954, and Cys2957 together coordinate Zn(2+). The RdRp catalytic domain occupies 3035-3187 (GGFYADDTAG…RPIDDRFGMA (153 aa)). The Zn(2+) site is built by His3222, Cys3238, and Cys3357.

It in the N-terminal section; belongs to the class I-like SAM-binding methyltransferase superfamily. mRNA cap 0-1 NS5-type methyltransferase family. In terms of assembly, homodimer. Interacts (via N-terminus) with host EXOC1 (via C-terminus); this interaction results in EXOC1 degradation through the proteasome degradation pathway. As to quaternary structure, forms heterodimers with envelope protein E in the endoplasmic reticulum and Golgi. Homodimer; in the endoplasmic reticulum and Golgi. Interacts with protein prM. Interacts with non-structural protein 1. In terms of assembly, homodimer; Homohexamer when secreted. Interacts with envelope protein E. As to quaternary structure, interacts (via N-terminus) with serine protease NS3. Forms a heterodimer with serine protease NS3. May form homooligomers. In terms of assembly, forms a heterodimer with NS2B. Interacts with non-structural protein 2A (via N-terminus). Interacts with NS4B. Interacts with unphosphorylated RNA-directed RNA polymerase NS5; this interaction stimulates RNA-directed RNA polymerase NS5 guanylyltransferase activity. NS3 interacts with host PDCD6IP; this interaction contributes to virion release. As to quaternary structure, interacts with serine protease NS3. Homodimer. Interacts with host STAT2; this interaction prevents the establishment of cellular antiviral state. Interacts with serine protease NS3. Interacts with host TRIM23; this interaction leads to NS5 ubiquitination. Specific enzymatic cleavages in vivo yield mature proteins. The nascent capsid protein C contains a C-terminal hydrophobic domain that act as a signal sequence for translocation of prM into the lumen of the ER. Mature capsid protein C is cleaved at a site upstream of this hydrophobic domain by NS3. prM is cleaved in post-Golgi vesicles by a host furin, releasing the mature small envelope protein M, and peptide pr. Non-structural protein 2A-alpha, a C-terminally truncated form of non-structural protein 2A, results from partial cleavage by NS3. Specific enzymatic cleavages in vivo yield mature proteins peptide 2K acts as a signal sequence and is removed from the N-terminus of NS4B by the host signal peptidase in the ER lumen. Signal cleavage at the 2K-4B site requires a prior NS3 protease-mediated cleavage at the 4A-2K site. Post-translationally, cleaved in post-Golgi vesicles by a host furin, releasing the mature small envelope protein M, and peptide pr. This cleavage is incomplete as up to 30% of viral particles still carry uncleaved prM. In terms of processing, N-glycosylated. N-glycosylated. The excreted form is glycosylated and this is required for efficient secretion of the protein from infected cells. Post-translationally, polyubiquitinated; ubiquitination is probably mediated by host TRIM23 and is prerequisite for NS5-STAT2 interaction. NS5 is not ISGylated or sumoylated. In terms of processing, acetylated by host KAT5. Acetylation modulates NS3 RNA-binding and unwinding activities and plays an important positive role for viral replication. Phosphorylated on serines residues. This phosphorylation may trigger NS5 nuclear localization.

Its subcellular location is the virion. The protein resides in the host nucleus. It localises to the host cytoplasm. The protein localises to the host perinuclear region. It is found in the secreted. Its subcellular location is the virion membrane. The protein resides in the host endoplasmic reticulum membrane. It carries out the reaction Selective hydrolysis of -Xaa-Xaa-|-Yaa- bonds in which each of the Xaa can be either Arg or Lys and Yaa can be either Ser or Ala.. The catalysed reaction is RNA(n) + a ribonucleoside 5'-triphosphate = RNA(n+1) + diphosphate. The enzyme catalyses a ribonucleoside 5'-triphosphate + H2O = a ribonucleoside 5'-diphosphate + phosphate + H(+). It catalyses the reaction ATP + H2O = ADP + phosphate + H(+). It carries out the reaction a 5'-end (5'-triphosphoguanosine)-ribonucleoside in mRNA + S-adenosyl-L-methionine = a 5'-end (N(7)-methyl 5'-triphosphoguanosine)-ribonucleoside in mRNA + S-adenosyl-L-homocysteine. The catalysed reaction is a 5'-end (N(7)-methyl 5'-triphosphoguanosine)-ribonucleoside in mRNA + S-adenosyl-L-methionine = a 5'-end (N(7)-methyl 5'-triphosphoguanosine)-(2'-O-methyl-ribonucleoside) in mRNA + S-adenosyl-L-homocysteine + H(+). Its function is as follows. Plays a role in virus budding by binding to the cell membrane and gathering the viral RNA into a nucleocapsid that forms the core of a mature virus particle. During virus entry, may induce genome penetration into the host cytoplasm after hemifusion induced by the surface proteins. Can migrate to the cell nucleus where it modulates host functions. In terms of biological role, inhibits RNA silencing by interfering with host Dicer. Functionally, prevents premature fusion activity of envelope proteins in trans-Golgi by binding to envelope protein E at pH6.0. After virion release in extracellular space, gets dissociated from E dimers. Acts as a chaperone for envelope protein E during intracellular virion assembly by masking and inactivating envelope protein E fusion peptide. prM is the only viral peptide matured by host furin in the trans-Golgi network probably to avoid catastrophic activation of the viral fusion activity in acidic Golgi compartment prior to virion release. prM-E cleavage is inefficient, and many virions are only partially matured. These uncleaved prM would play a role in immune evasion. Its function is as follows. May play a role in virus budding. Exerts cytotoxic effects by activating a mitochondrial apoptotic pathway through M ectodomain. May display a viroporin activity. In terms of biological role, binds to host cell surface receptor and mediates fusion between viral and cellular membranes. Envelope protein is synthesized in the endoplasmic reticulum in the form of heterodimer with protein prM. They play a role in virion budding in the ER, and the newly formed immature particle is covered with 60 spikes composed of heterodimer between precursor prM and envelope protein E. The virion is transported to the Golgi apparatus where the low pH causes dissociation of PrM-E heterodimers and formation of E homodimers. prM-E cleavage is inefficient, and many virions are only partially matured. These uncleaved prM would play a role in immune evasion. Functionally, involved in immune evasion, pathogenesis and viral replication. Once cleaved off the polyprotein, is targeted to three destinations: the viral replication cycle, the plasma membrane and the extracellular compartment. Essential for viral replication. Required for formation of the replication complex and recruitment of other non-structural proteins to the ER-derived membrane structures. Excreted as a hexameric lipoparticle that plays a role against host immune response. Antagonizing the complement function. Binds to the host macrophages and dendritic cells. Inhibits signal transduction originating from Toll-like receptor 3 (TLR3). Component of the viral RNA replication complex that functions in virion assembly and antagonizes the host immune response. Its function is as follows. Required cofactor for the serine protease function of NS3. May have membrane-destabilizing activity and form viroporins. In terms of biological role, displays three enzymatic activities: serine protease, NTPase and RNA helicase. NS3 serine protease, in association with NS2B, performs its autocleavage and cleaves the polyprotein at dibasic sites in the cytoplasm: C-prM, NS2A-NS2B, NS2B-NS3, NS3-NS4A, NS4A-2K and NS4B-NS5. NS3 RNA helicase binds RNA and unwinds dsRNA in the 3' to 5' direction. Also plays a role in virus assembly. Functionally, regulates the ATPase activity of the NS3 helicase activity. NS4A allows NS3 helicase to conserve energy during unwinding. Functions as a signal peptide for NS4B and is required for the interferon antagonism activity of the latter. Its function is as follows. Induces the formation of ER-derived membrane vesicles where the viral replication takes place. Inhibits interferon (IFN)-induced host STAT1 phosphorylation and nuclear translocation, thereby preventing the establishment of cellular antiviral state by blocking the IFN-alpha/beta pathway. In terms of biological role, replicates the viral (+) and (-) RNA genome, and performs the capping of genomes in the cytoplasm. NS5 methylates viral RNA cap at guanine N-7 and ribose 2'-O positions. Besides its role in RNA genome replication, also prevents the establishment of cellular antiviral state by blocking the interferon-alpha/beta (IFN-alpha/beta) signaling pathway. IFN-I induces binding of NS5 to host IFN-activated transcription factor STAT2, preventing its transcriptional activity. Host TRIM23 is the E3 ligase that interacts with and polyubiquitinates NS5 to promote its binding to STAT2 and trigger IFN-I signaling inhibition. This Yellow fever virus (isolate Ivory Coast/85-82H/1982) (YFV) protein is Genome polyprotein.